The sequence spans 115 residues: NADH-ubiquinone oxidoreductase chain 3 (115 aa).

A run of 3 helical transmembrane segments spans residues 4–24 (LTALLVNITLSMLLIIIAFWL), 55–75 (FFLVAITFLLFDLEIALLLPL), and 83–103 (YINIMMSTAFILVSVLALGLA).

Belongs to the complex I subunit 3 family. In terms of assembly, core subunit of respiratory chain NADH dehydrogenase (Complex I) which is composed of 45 different subunits. Interacts with TMEM186. Interacts with TMEM242.

It is found in the mitochondrion inner membrane. It carries out the reaction a ubiquinone + NADH + 5 H(+)(in) = a ubiquinol + NAD(+) + 4 H(+)(out). Functionally, core subunit of the mitochondrial membrane respiratory chain NADH dehydrogenase (Complex I) which catalyzes electron transfer from NADH through the respiratory chain, using ubiquinone as an electron acceptor. Essential for the catalytic activity of complex I. This Peromyscus polionotus (Oldfield mouse) protein is NADH-ubiquinone oxidoreductase chain 3.